A 58-amino-acid chain; its full sequence is Large ribosomal subunit protein bL32 (58 aa).

Disordered regions lie at residues 1-22 and 39-58; these read MAVP…HWKR and LSGR…DDEE.

Belongs to the bacterial ribosomal protein bL32 family.

The sequence is that of Large ribosomal subunit protein bL32 from Crocosphaera subtropica (strain ATCC 51142 / BH68) (Cyanothece sp. (strain ATCC 51142)).